Here is a 510-residue protein sequence, read N- to C-terminus: Peptide transporter imqJ (510 aa).

3 helical membrane-spanning segments follow: residues 1–21 (MVNQ…AVVA), 31–51 (IIFS…SSLP), and 57–77 (GISL…TGGI). Asn80 is a glycosylation site (N-linked (GlcNAc...) asparagine). Helical transmembrane passes span 116–136 (IFTT…LITI), 143–163 (FSAA…IVLV), 231–251 (IFIL…NFIS), and 269–289 (IDPI…FPFL). One can recognise a Fe2OG dioxygenase domain in the interval 348-468 (PAASEIRLLY…RCSSVFFFKA (121 aa)). The Fe cation site is built by His377 and Asp379. Asn421 is a glycosylation site (N-linked (GlcNAc...) asparagine). His439 provides a ligand contact to Fe cation. Arg459 lines the 2-oxoglutarate pocket.

The protein belongs to the major facilitator superfamily. Proton-dependent oligopeptide transporter (POT/PTR) (TC 2.A.17) family.

The protein resides in the membrane. In terms of biological role, peptide transporter; part of the gene cluster that mediates the biosynthesis of imizoquins A to D, tripeptide-derived alkaloids that serve a protective role against oxidative stress that are essential for normal germination. This Aspergillus flavus (strain ATCC 200026 / FGSC A1120 / IAM 13836 / NRRL 3357 / JCM 12722 / SRRC 167) protein is Peptide transporter imqJ.